Consider the following 914-residue polypeptide: UPF0182 protein PTH_1387 (914 aa).

7 helical membrane passes run 7–27, 48–68, 109–129, 173–193, 209–229, 252–272, and 281–301; these read FAAYVLAGFGLIFLALTIAGA, IIISDLGLRLAVGLTFFVLLF, LLLLAFIALSALMAFLFNFTV, INWVILVSAFWVLAAYFVVYF, YHFSFLAAIFFGLKAAGYQLE, TLLAYKVLTYIALLCALAILI, and LVIYSIGVLLIASVLLGGIYP.

Belongs to the UPF0182 family.

It localises to the cell membrane. This is UPF0182 protein PTH_1387 from Pelotomaculum thermopropionicum (strain DSM 13744 / JCM 10971 / SI).